A 103-amino-acid polypeptide reads, in one-letter code: Small ribosomal subunit protein bS6c (103 aa).

The protein belongs to the bacterial ribosomal protein bS6 family.

It localises to the plastid. Its subcellular location is the chloroplast. In terms of biological role, binds together with bS18 to 16S ribosomal RNA. This chain is Small ribosomal subunit protein bS6c, found in Thalassiosira pseudonana (Marine diatom).